The primary structure comprises 330 residues: MQNLGIAITGSGSAVPETSLHNEELSQLVETSDEWISTRTGIRQRRLALPTESLSSLAAAASRQAIASAGITASDIDLILLATSTPDDLFGTATKIQAELGANKAVAFDLTAACSGFVFGLVTAAQFIRTGVYQNVLLIGADILSRWVDWQDRRTCVLFGDGAGAVVLQANSSDRLLGFALKSDGTQNHYLNLAYQGTAKEILPNVKITQGTYQPVTMNGKEVYRFAAQKVPEIIDKALFEAQLTVDQIDWLLLHQANQRILDTVAQRLNIPAHKVISNLANYGNTSAASIPLALDEAVREGKIKPNDIIATSGFGAGLTWGAAIFQWGR.

Active-site residues include C114 and H255. Positions 256 to 260 (QANQR) are ACP-binding. The active site involves N285.

It belongs to the thiolase-like superfamily. FabH family. As to quaternary structure, homodimer.

Its subcellular location is the cytoplasm. It carries out the reaction malonyl-[ACP] + acetyl-CoA + H(+) = 3-oxobutanoyl-[ACP] + CO2 + CoA. It functions in the pathway lipid metabolism; fatty acid biosynthesis. Functionally, catalyzes the condensation reaction of fatty acid synthesis by the addition to an acyl acceptor of two carbons from malonyl-ACP. Catalyzes the first condensation reaction which initiates fatty acid synthesis and may therefore play a role in governing the total rate of fatty acid production. Possesses both acetoacetyl-ACP synthase and acetyl transacylase activities. Its substrate specificity determines the biosynthesis of branched-chain and/or straight-chain of fatty acids. The chain is Beta-ketoacyl-[acyl-carrier-protein] synthase III from Nostoc sp. (strain PCC 7120 / SAG 25.82 / UTEX 2576).